The following is a 49-amino-acid chain: Large ribosomal subunit protein eL40 (49 aa).

This sequence belongs to the eukaryotic ribosomal protein eL40 family.

In Natronomonas pharaonis (strain ATCC 35678 / DSM 2160 / CIP 103997 / JCM 8858 / NBRC 14720 / NCIMB 2260 / Gabara) (Halobacterium pharaonis), this protein is Large ribosomal subunit protein eL40.